The sequence spans 143 residues: Histone H2B.2, sperm (143 aa).

Positions methionine 1 to arginine 49 are disordered. 5 consecutive short sequence motifs (SPKK motif) follow at residues serine 4–lysine 7, serine 9–lysine 12, serine 14–lysine 17, serine 19–lysine 22, and serine 24–arginine 27. The span at serine 9–arginine 49 shows a compositional bias: basic residues. Phosphoserine is present on residues serine 14, serine 19, and serine 24. The O-linked (GlcNAc) serine glycan is linked to serine 129. Lysine 137 participates in a covalent cross-link: Glycyl lysine isopeptide (Lys-Gly) (interchain with G-Cter in ubiquitin).

This sequence belongs to the histone H2B family. In terms of assembly, the nucleosome is a histone octamer containing two molecules each of H2A, H2B, H3 and H4 assembled in one H3-H4 heterotetramer and two H2A-H2B heterodimers. The octamer wraps approximately 147 bp of DNA. Post-translationally, monoubiquitination of Lys-137 gives a specific tag for epigenetic transcriptional activation and is also prerequisite for histone H3 'Lys-4' and 'Lys-79' methylation. Phosphorylated on SPKK motifs 3, 4 and 5; which may regulate DNA binding. Dephosphorylated during maturation of spermatids to mature sperm and rephosphorylated at fertilization. In terms of processing, glcNAcylation at Ser-129 promotes monoubiquitination of Lys-137. It fluctuates in response to extracellular glucose, and associates with transcribed genes.

The protein localises to the nucleus. It is found in the chromosome. Core component of nucleosome. Nucleosomes wrap and compact DNA into chromatin, limiting DNA accessibility to the cellular machineries which require DNA as a template. Histones thereby play a central role in transcription regulation, DNA repair, DNA replication and chromosomal stability. DNA accessibility is regulated via a complex set of post-translational modifications of histones, also called histone code, and nucleosome remodeling. The chain is Histone H2B.2, sperm from Psammechinus miliaris (Green sea urchin).